Here is a 461-residue protein sequence, read N- to C-terminus: Ornithine decarboxylase (461 aa).

N6-(pyridoxal phosphate)lysine is present on K69. Pyridoxal 5'-phosphate is bound by residues S200, G237, and 274–277 (EPGR). A Phosphoserine; by CK2 modification is found at S303. 331–332 (YD) lines the substrate pocket. C360 functions as the Proton donor; shared with dimeric partner in the catalytic mechanism. At C360 the chain carries S-nitrosocysteine; in inhibited form. Substrate is bound at residue D361. Y389 is a binding site for pyridoxal 5'-phosphate.

This sequence belongs to the Orn/Lys/Arg decarboxylase class-II family. In terms of assembly, homodimer. Only the dimer is catalytically active, as the active sites are constructed of residues from both monomers. Does not form a heterodimer with AZIN2. It depends on pyridoxal 5'-phosphate as a cofactor. Post-translationally, S-Nitrosylation inhibits the enzyme. S-Nitrosylated in vitro on 4 cysteine residues.

It catalyses the reaction L-ornithine + H(+) = putrescine + CO2. Its pathway is amine and polyamine biosynthesis; putrescine biosynthesis via L-ornithine pathway; putrescine from L-ornithine: step 1/1. With respect to regulation, inhibited by S-nitrosylation. Inhibited by antizymes (AZs) OAZ1, OAZ2 and OAZ3 in response to polyamine levels. AZs inhibit the assembly of the functional homodimer by binding to ODC monomers. Additionally, OAZ1 targets ODC monomers for ubiquitin-independent proteolytic destruction by the 26S proteasome. Inhibited by 1-amino-oxy-3-aminopropane (APA, an isosteric analog of putrescine). Irreversibly inhibited by alpha-difluoromethylornithine (DFMO). Its function is as follows. Catalyzes the first and rate-limiting step of polyamine biosynthesis that converts ornithine into putrescine, which is the precursor for the polyamines, spermidine and spermine. Polyamines are essential for cell proliferation and are implicated in cellular processes, ranging from DNA replication to apoptosis. This is Ornithine decarboxylase (ODC1) from Homo sapiens (Human).